The primary structure comprises 336 residues: Ferrochelatase (336 aa).

2 residues coordinate Fe cation: H206 and E287.

The protein belongs to the ferrochelatase family.

Its subcellular location is the cytoplasm. The catalysed reaction is heme b + 2 H(+) = protoporphyrin IX + Fe(2+). Its pathway is porphyrin-containing compound metabolism; protoheme biosynthesis; protoheme from protoporphyrin-IX: step 1/1. In terms of biological role, catalyzes the ferrous insertion into protoporphyrin IX. The protein is Ferrochelatase of Neisseria meningitidis serogroup C / serotype 2a (strain ATCC 700532 / DSM 15464 / FAM18).